The following is a 176-amino-acid chain: RNA pyrophosphohydrolase (176 aa).

Residues 6-149 form the Nudix hydrolase domain; it reads GYRPNVGIVI…KRDVYRRVMK (144 aa). The short motif at 38 to 59 is the Nudix box element; sequence GGINPGESPEQAMYRELFEEVG.

Belongs to the Nudix hydrolase family. RppH subfamily. A divalent metal cation is required as a cofactor.

Its function is as follows. Accelerates the degradation of transcripts by removing pyrophosphate from the 5'-end of triphosphorylated RNA, leading to a more labile monophosphorylated state that can stimulate subsequent ribonuclease cleavage. The sequence is that of RNA pyrophosphohydrolase from Proteus mirabilis (strain HI4320).